A 1380-amino-acid polypeptide reads, in one-letter code: MSSSVTSKYVLNSFSSVPRLSYAKSIDIKDSLTDLIKIQRDSYNAFIGIDQDVDSGIKNIFQSMFPIQDLLGRAVLQFVSYSIGEPQYDEYECIKRGITYSVPIRIVLRFIVWKVQEVSFKEVKYVVDEETSEKSIKYIKEQEVSIGDLPTMTSYGTFIINGVERVIVSQMHRSPGVFFDSDKGKTYSSGKLIYLARIIPYRGSWLDFEFDIKDILYFRIDRKRKLPVSLLLRALGLSNSEILDTFYDKIRYERCENGWVVPFVVDRFRGVRLSYDLVDIDGNVLVKANTRITLRLAKKLASDGLKKYLVPFAEIQGLFIANDLVDPASNVMIMCAGESITSEHINKLKLFDINEIFILNIDFLTVGPYILNTLFLDKNISYEDALFEIYKVLRSGESPSLDTMKAFFDGLFFEKERYDLSTVGRIKLNDHLGLDISEDVTVLTKDDIIHVIKKLVLLRDGEGFVDDIDHLGNRRVRSVGEFIENQFRIGILRLERMIMDYMSSVNFDNAMPCDFVNPKVLATVLKDFFSSSQLSQFMDQTNPLSEVTHKRRLSALGPGGLTRERAGFEVRDVHPTHYGRICPIETPEGQNIGLISSLAIYARINKHGFIESPYRKVDNGIVTDKVEYLLAMQESNYYIADASATLDENNRFVDDMLYCRHDGNFVMVKREQVDYIDVSPKQIVSVAASLIPFLENNDANRALMGSNMQRQAVPLLKADAPLVGTGMESIVAAGSGTVVLAKRSGIVHRVDGLYIVIRAFDKEKNEYLGVDIYNLRKFQRSNHNTCINQKPLVKPGDYVRENDVIADGSAIDQGELALGKNVLVAFMSWQGYNFEDSIVISSEVVKKDVFTSIHIEEFECVVRDTALGPEKIMRSIPDVNEDSLSHLDDVGIVNVGAEVSAGDILVGKVTPRPPVSLPPETKLLVTIFGEKVFDCVDSSLYLPIDVEGTVVDVHVFVRRGVEENDRSLLIKQNEINGFIKERDYEIDVVSEYFYDELKRVLVNTNTEYNNQNIEDYLKSIPQKSWWDIKLSDESVLSQISDLKEKFDSMIENAHSKFDQKIDKLNYGYDLPQGVLCIVKVFVAVKHNLQPGDKMAGRHGNKGVISRIVPVEDMPYLEDGTPVDIILNSLGVPSRMNVGQILETHLGWASVNLGKKIGNILDNIDELTIAHLRNFLDQVYDGQDLKYSIRSMSDDDLLAFAERLRDGVPMAAPVFEGPKDNQISNLLKLADLDVSGQVDLYDGRIGEKFDRKVTVGYIYMLKLHHLVDDKIHARSVGPYGLVTQQPLGGKSHFGGQRFGEMECWALQAYGAAYTLQEMLTVKSDDIVGRVKIYESIIKGDSNFECGIPESFNVMVKELRSLCLDVALKQDKDFLHDRKINN.

The protein belongs to the RNA polymerase beta chain family. In terms of assembly, the RNAP catalytic core consists of 2 alpha, 1 beta, 1 beta' and 1 omega subunit. When a sigma factor is associated with the core the holoenzyme is formed, which can initiate transcription.

It carries out the reaction RNA(n) + a ribonucleoside 5'-triphosphate = RNA(n+1) + diphosphate. DNA-dependent RNA polymerase catalyzes the transcription of DNA into RNA using the four ribonucleoside triphosphates as substrates. In Ehrlichia ruminantium (strain Gardel), this protein is DNA-directed RNA polymerase subunit beta.